Here is a 265-residue protein sequence, read N- to C-terminus: Ribosomal RNA small subunit methyltransferase A (265 aa).

Positions 17, 19, 44, 65, 90, and 112 each coordinate S-adenosyl-L-methionine.

This sequence belongs to the class I-like SAM-binding methyltransferase superfamily. rRNA adenine N(6)-methyltransferase family. RsmA subfamily.

The protein resides in the cytoplasm. The catalysed reaction is adenosine(1518)/adenosine(1519) in 16S rRNA + 4 S-adenosyl-L-methionine = N(6)-dimethyladenosine(1518)/N(6)-dimethyladenosine(1519) in 16S rRNA + 4 S-adenosyl-L-homocysteine + 4 H(+). Its function is as follows. Specifically dimethylates two adjacent adenosines (A1518 and A1519) in the loop of a conserved hairpin near the 3'-end of 16S rRNA in the 30S particle. May play a critical role in biogenesis of 30S subunits. This is Ribosomal RNA small subunit methyltransferase A from Xylella fastidiosa (strain 9a5c).